We begin with the raw amino-acid sequence, 309 residues long: Movement protein (309 aa).

The disordered stretch occupies residues 245–273; it reads HLSLNESKTLPSTSTTEAEGSERRIHIGA. Over residues 246–262 the composition is skewed to polar residues; that stretch reads LSLNESKTLPSTSTTEA.

It is found in the host cell junction. The protein resides in the host plasmodesma. Functionally, transports viral genome to neighboring plant cells directly through plasmosdesmata, without any budding. The movement protein allows efficient cell to cell propagation, by bypassing the host cell wall barrier. Acts by forming a tubular structure at the host plasmodesmata, enlarging it enough to allow free passage of virion capsids. In Solanum lycopersicum (Tomato), this protein is Movement protein.